Consider the following 635-residue polypeptide: MINISFPDGSIKQFAKNITAYEVANAISMSLAKAAMVAEINGELQDLSIVIDNDCKLRILTAQDPECLEIIRHDAAHLTAEAVKELFPETQVTIGPAIENGYYYDFARDKPFTTDDLAVIEAKMQELSQKNEQVTRELWDRDKAVEFFKSIGEHYKAEIIASIPAGEPITLYRQGNFIDLCRGPHAPSTGVVKHFKLMKVAGAYWRGDSRNEMLQRIYGTAWATKEQLDSYLLMLEEAEKRDHRKLGRELDLFHFQEEAQGMVFWHDKGWSIYNTIEQYIRKKIRKNGYTEVKTPVLVDKSLWEASGHWEKFRDDMFALETDDKTLALKPMNCPCHVQIFKQGIKSYRDLPLRMSEFGLCHRNEASGALHGLMRVRSLVQDDAHIFCAAEQITDETVSFCKLLTEVYKDFGFTDIKVKFSDRPEIRAGSNEVWDKAENALKEAVEQAGFNYTLNPGEGAFYGPKLEFVLTDAIGRQWQCGTLQMDFVLPERLDASYVAASGEKKRPVMLHRAILGSLERFIGILIEEYAGRFPLWLAPVQVAIATITSDLNDYALEVQKALIDNGVRTDFNISPDKINYKIREFSNQKIPMIAVIGKQEQENKQVAIRRLGTTDQEVLSVEQLIAVVKEENEKYL.

The 61-residue stretch at 1 to 61 folds into the TGS domain; it reads MINISFPDGS…DNDCKLRILT (61 aa). The tract at residues 242 to 533 is catalytic; it reads DHRKLGRELD…LIEEYAGRFP (292 aa). Positions 333, 384, and 510 each coordinate Zn(2+).

This sequence belongs to the class-II aminoacyl-tRNA synthetase family. Homodimer. It depends on Zn(2+) as a cofactor.

The protein localises to the cytoplasm. It carries out the reaction tRNA(Thr) + L-threonine + ATP = L-threonyl-tRNA(Thr) + AMP + diphosphate + H(+). Its function is as follows. Catalyzes the attachment of threonine to tRNA(Thr) in a two-step reaction: L-threonine is first activated by ATP to form Thr-AMP and then transferred to the acceptor end of tRNA(Thr). Also edits incorrectly charged L-seryl-tRNA(Thr). This is Threonine--tRNA ligase from Rickettsia conorii (strain ATCC VR-613 / Malish 7).